Consider the following 190-residue polypeptide: Adenine phosphoribosyltransferase (190 aa).

The protein belongs to the purine/pyrimidine phosphoribosyltransferase family. Homodimer.

The protein localises to the cytoplasm. It catalyses the reaction AMP + diphosphate = 5-phospho-alpha-D-ribose 1-diphosphate + adenine. It functions in the pathway purine metabolism; AMP biosynthesis via salvage pathway; AMP from adenine: step 1/1. Functionally, catalyzes a salvage reaction resulting in the formation of AMP, that is energically less costly than de novo synthesis. This is Adenine phosphoribosyltransferase from Cupriavidus metallidurans (strain ATCC 43123 / DSM 2839 / NBRC 102507 / CH34) (Ralstonia metallidurans).